We begin with the raw amino-acid sequence, 293 residues long: 4-hydroxy-3-methylbut-2-enyl diphosphate reductase (293 aa).

Cys-12 lines the [4Fe-4S] cluster pocket. (2E)-4-hydroxy-3-methylbut-2-enyl diphosphate is bound by residues His-40 and His-74. Positions 40 and 74 each coordinate dimethylallyl diphosphate. Isopentenyl diphosphate is bound by residues His-40 and His-74. Cys-96 contributes to the [4Fe-4S] cluster binding site. His-128 provides a ligand contact to (2E)-4-hydroxy-3-methylbut-2-enyl diphosphate. His-128 is a dimethylallyl diphosphate binding site. An isopentenyl diphosphate-binding site is contributed by His-128. The active-site Proton donor is the Glu-130. A (2E)-4-hydroxy-3-methylbut-2-enyl diphosphate-binding site is contributed by Thr-166. Cys-202 contributes to the [4Fe-4S] cluster binding site. Residues Ser-230, Ser-231, Asn-232, and Ser-274 each contribute to the (2E)-4-hydroxy-3-methylbut-2-enyl diphosphate site. Dimethylallyl diphosphate-binding residues include Ser-230, Ser-231, Asn-232, and Ser-274. Residues Ser-230, Ser-231, Asn-232, and Ser-274 each coordinate isopentenyl diphosphate.

It belongs to the IspH family. Requires [4Fe-4S] cluster as cofactor.

The enzyme catalyses isopentenyl diphosphate + 2 oxidized [2Fe-2S]-[ferredoxin] + H2O = (2E)-4-hydroxy-3-methylbut-2-enyl diphosphate + 2 reduced [2Fe-2S]-[ferredoxin] + 2 H(+). The catalysed reaction is dimethylallyl diphosphate + 2 oxidized [2Fe-2S]-[ferredoxin] + H2O = (2E)-4-hydroxy-3-methylbut-2-enyl diphosphate + 2 reduced [2Fe-2S]-[ferredoxin] + 2 H(+). The protein operates within isoprenoid biosynthesis; dimethylallyl diphosphate biosynthesis; dimethylallyl diphosphate from (2E)-4-hydroxy-3-methylbutenyl diphosphate: step 1/1. It functions in the pathway isoprenoid biosynthesis; isopentenyl diphosphate biosynthesis via DXP pathway; isopentenyl diphosphate from 1-deoxy-D-xylulose 5-phosphate: step 6/6. Its function is as follows. Catalyzes the conversion of 1-hydroxy-2-methyl-2-(E)-butenyl 4-diphosphate (HMBPP) into a mixture of isopentenyl diphosphate (IPP) and dimethylallyl diphosphate (DMAPP). Acts in the terminal step of the DOXP/MEP pathway for isoprenoid precursor biosynthesis. This is 4-hydroxy-3-methylbut-2-enyl diphosphate reductase from Cytophaga hutchinsonii (strain ATCC 33406 / DSM 1761 / CIP 103989 / NBRC 15051 / NCIMB 9469 / D465).